Consider the following 189-residue polypeptide: Chitin synthase 2 (189 aa).

The protein belongs to the chitin synthase family. Class II subfamily.

The protein localises to the cell membrane. The enzyme catalyses [(1-&gt;4)-N-acetyl-beta-D-glucosaminyl](n) + UDP-N-acetyl-alpha-D-glucosamine = [(1-&gt;4)-N-acetyl-beta-D-glucosaminyl](n+1) + UDP + H(+). Functionally, polymerizes chitin, a structural polymer of the cell wall and septum, by transferring the sugar moiety of UDP-GlcNAc to the non-reducing end of the growing chitin polymer. The polypeptide is Chitin synthase 2 (CHS2) (Ajellomyces dermatitidis (Blastomyces dermatitidis)).